Consider the following 494-residue polypeptide: Alpha-amylase B (494 aa).

A signal peptide spans 1 to 18; the sequence is MFLAKSIVCLALLAVANA. Q19 carries the post-translational modification Pyrrolidone carboxylic acid. C46 and C102 form a disulfide bridge. Residues N116, R165, and D174 each contribute to the Ca(2+) site. C153 and C167 are disulfide-bonded. Chloride is bound at residue R202. The active-site Nucleophile is D204. Ca(2+) is bound at residue H208. E241 serves as the catalytic Proton donor. Chloride-binding residues include N304 and R343. 2 disulfides stabilise this stretch: C376-C382 and C448-C460.

Belongs to the glycosyl hydrolase 13 family. In terms of assembly, monomer. The cofactor is Ca(2+). Chloride is required as a cofactor.

It carries out the reaction Endohydrolysis of (1-&gt;4)-alpha-D-glucosidic linkages in polysaccharides containing three or more (1-&gt;4)-alpha-linked D-glucose units.. The sequence is that of Alpha-amylase B (Amy-d) from Drosophila melanogaster (Fruit fly).